Reading from the N-terminus, the 522-residue chain is Glucans biosynthesis protein G (522 aa).

Residues 1–33 form the signal peptide; it reads MPNNKFFVKSSKASLRWLGATVLLTLYALPSWA.

It belongs to the OpgD/OpgG family.

The protein localises to the periplasm. It functions in the pathway glycan metabolism; osmoregulated periplasmic glucan (OPG) biosynthesis. In terms of biological role, involved in the biosynthesis of osmoregulated periplasmic glucans (OPGs). The protein is Glucans biosynthesis protein G of Sodalis glossinidius (strain morsitans).